A 195-amino-acid chain; its full sequence is CASP-like protein Os03g0196400 (195 aa).

The Cytoplasmic portion of the chain corresponds to 1-38 (MRQQQAGGVGDGVSPGNVPVCYYGPGGRVPSSLERRAR). Residues 39-59 (AAEVLLRCAACGLAVLAAALL) traverse the membrane as a helical segment. Residues 60 to 81 (GADRQTRVFFSIQKVARYTDMQ) are Extracellular-facing. The helical transmembrane segment at 82–102 (SLVLLVIANGMAACYSLIQCA) threads the bilayer. The Cytoplasmic segment spans residues 103 to 104 (RC). A helical transmembrane segment spans residues 105–125 (LVMAYIVISAVAAAMEAALIG). The Extracellular segment spans residues 126–150 (KYGQPEFQWMKTCHLYKRFCAQAGG). Residues 151–171 (GVACAIAASVNMVGVALISAF) form a helical membrane-spanning segment. Over 172–195 (NLFRLYGNSNGGGKATTTTMAGGK) the chain is Cytoplasmic.

The protein belongs to the Casparian strip membrane proteins (CASP) family. As to quaternary structure, homodimer and heterodimers.

The protein resides in the cell membrane. The chain is CASP-like protein Os03g0196400 from Oryza sativa subsp. japonica (Rice).